Reading from the N-terminus, the 821-residue chain is Ribonuclease R (821 aa).

The region spanning 267–593 (RVDLRALPLV…LLHRAIKYLI (327 aa)) is the RNB domain. The 82-residue stretch at 652–733 (GEELEGVVAN…DDRQIDFELV (82 aa)) folds into the S1 motif domain. The segment at 739–821 (LRGQGKTAKK…KSGKVRDKTK (83 aa)) is disordered. Basic and acidic residues-rich tracts occupy residues 748–764 (KRAD…KEAA) and 774–794 (TKSE…EGRS). The segment covering 795–814 (KPKKTKAPKKRKDQARKKSG) has biased composition (basic residues).

It belongs to the RNR ribonuclease family. RNase R subfamily.

It localises to the cytoplasm. It carries out the reaction Exonucleolytic cleavage in the 3'- to 5'-direction to yield nucleoside 5'-phosphates.. Its function is as follows. 3'-5' exoribonuclease that releases 5'-nucleoside monophosphates and is involved in maturation of structured RNAs. This chain is Ribonuclease R, found in Vibrio cholerae serotype O1 (strain ATCC 39315 / El Tor Inaba N16961).